Consider the following 477-residue polypeptide: Regulator of G-protein signaling 7 (477 aa).

In terms of domain architecture, DEP spans 37–112 (EKNGIPIRTV…DDGTFYRFQT (76 aa)). Phosphoserine is present on residues Ser229 and Ser241. The tract at residues 236 to 257 (DIRSHSPTHTPTPETKPPTEDE) is disordered. At Thr243 the chain carries Phosphothreonine. The 62-residue stretch at 255-316 (EDELHRQIKY…LSDDTTFWEL (62 aa)) folds into the G protein gamma domain. Residues 333–448 (GMDEALKDPV…IRSSAYQELL (116 aa)) enclose the RGS domain. Ser434 is modified (phosphoserine).

As to quaternary structure, interacts with GNB5, forming the RGS7-GNB5 complex. Interacts with GPR158; promotes the GTPase activator activity of the RGS7-GNB5 complex in absence of glycine, in contrast GTPase activator activity of the RGS7-GNB5 complex is inhibited in presence of glycine. Interacts with GPR179. Interacts with PKD1; this prevents rapid proteasomal degradation. Interacts with RGS7BP, leading to regulate the subcellular location of the heterodimer formed with GNB5. Interacts (phosphorylated form) with 14-3-3 protein YWHAQ. Interacts with SNAPIN. Interacts with GNAI1. Interacts with GNAO1, GNAI3 and GNAZ. In terms of processing, palmitoylated. Post-translationally, ubiquitinated, leading to rapid proteasomal degradation. Phosphorylation and subsequent interaction with 14-3-3 proteins inhibits GAP activity. As to expression, brain-specific. Predominantly cerebellar granule cells.

Its subcellular location is the cytoplasm. It localises to the cytosol. The protein localises to the cell membrane. It is found in the membrane. Its function is as follows. GTPase activator component of the RGS7-GNB5 complex that regulates G protein-coupled receptor signaling cascades. The RGS7-GNB5 complex acts as an inhibitor signal transduction by promoting the GTPase activity of G protein alpha subunits, such as GNAO1, thereby driving them into their inactive GDP-bound form. May play a role in synaptic vesicle exocytosis. Glycine-dependent regulation of the RGS7-GNB5 complex by GPR158 affects mood and cognition via its ability to regulate neuronal excitability in L2/L3 pyramidal neurons of the prefrontal cortex. Modulates the activity of potassium channels that are activated by GNAO1 in response to muscarinic acetylcholine receptor M2/CHRM2 signaling. The chain is Regulator of G-protein signaling 7 (Rgs7) from Rattus norvegicus (Rat).